The following is a 246-amino-acid chain: 5'-nucleotidase SurE (246 aa).

The a divalent metal cation site is built by Asp-8, Asp-9, Ser-39, and Asn-91.

The protein belongs to the SurE nucleotidase family. A divalent metal cation serves as cofactor.

The protein localises to the cytoplasm. The enzyme catalyses a ribonucleoside 5'-phosphate + H2O = a ribonucleoside + phosphate. Its function is as follows. Nucleotidase that shows phosphatase activity on nucleoside 5'-monophosphates. This is 5'-nucleotidase SurE from Mannheimia succiniciproducens (strain KCTC 0769BP / MBEL55E).